We begin with the raw amino-acid sequence, 440 residues long: MMKKNRNKKAMNKQEALFIPHYYRLGHLKNILDGGEYAPYVSPPILESNFIQVNRRGESIYLHNRANWVTVGICSSNPIFKTPNMMLLAHLTPEARKEPEPLFKTLLKSSSSGTLVLTRFIPLQFVTLSVHSAKNMRLKVKLINGRSYYLQLCAPVYKQDIIFSQWVDLIPLLNQEKIKNTKVSEVSSLSELTNSTDIAGSMDITDITAFRELRPRHPKTHRYPCNIMESADFSEYTDVTDVTDVTDVTDMLDNGITDVQDIKIVTEVTEVTEVTEVTEVSEVSDVKMATNISGVKIVFENDDIIKTKQEEKEYTLKHRSLQDTKTKSDYQDSPNPVTMSNIALALQDEGCFQTTQTPVKSKEDIYKEICDETSEENMIRLQNIHLKATESRSTRTDSDISDGELKLGRYLHKQCSSREQSFIHSLGSLPRGFVFLHLLL.

Belongs to the GARIN family. In terms of assembly, interacts with CALM1. As to expression, expressed in testis (at protein level).

Its subcellular location is the cell projection. The protein resides in the cilium. It localises to the flagellum. Seems to play a role in sperm motility. The chain is Golgi-associated RAB2 interactor protein 2 from Mus musculus (Mouse).